Consider the following 341-residue polypeptide: MTYRDAGVDIDAGNALVERIKPLVKRSFRPEVMGGLGGFGALFDLSGKYKEPVLVSGTDGVGTKLKLAQQLGRHDTIGIDLVGMCVNDVLVQGAEPLFFLDYFATGKLDVDTAAAVVGGIARGCELSGCALIGGETAEMPDMYPPGEYDLAGFTVGAVEKSQLLDGAQVRDGDVLIGIASSGPHSNGYSLIRKIYERAGAPAEHVLDDGTKLIDALMAPTALYVKPVLSLLKSHGEAIHAMAHITGGGLTENIIRVIPQGLGLDIDATAWTLPPVFAWLQREGAVADAEMWRTFNCGIGFVLIASLEQAATLEQALDAQSLAHWRIGQVVPAHGDERVRIG.

The protein belongs to the AIR synthase family.

The protein resides in the cytoplasm. The catalysed reaction is 2-formamido-N(1)-(5-O-phospho-beta-D-ribosyl)acetamidine + ATP = 5-amino-1-(5-phospho-beta-D-ribosyl)imidazole + ADP + phosphate + H(+). It participates in purine metabolism; IMP biosynthesis via de novo pathway; 5-amino-1-(5-phospho-D-ribosyl)imidazole from N(2)-formyl-N(1)-(5-phospho-D-ribosyl)glycinamide: step 2/2. The sequence is that of Phosphoribosylformylglycinamidine cyclo-ligase from Xanthomonas euvesicatoria pv. vesicatoria (strain 85-10) (Xanthomonas campestris pv. vesicatoria).